The primary structure comprises 60 residues: Large ribosomal subunit protein bL32 (60 aa).

The segment at M1 to Q23 is disordered.

The protein belongs to the bacterial ribosomal protein bL32 family.

The chain is Large ribosomal subunit protein bL32 from Chlamydia abortus (strain DSM 27085 / S26/3) (Chlamydophila abortus).